The chain runs to 344 residues: UDP-3-O-acylglucosamine N-acyltransferase (344 aa).

Catalysis depends on His-248, which acts as the Proton acceptor.

It belongs to the transferase hexapeptide repeat family. LpxD subfamily. In terms of assembly, homotrimer.

It carries out the reaction a UDP-3-O-[(3R)-3-hydroxyacyl]-alpha-D-glucosamine + a (3R)-hydroxyacyl-[ACP] = a UDP-2-N,3-O-bis[(3R)-3-hydroxyacyl]-alpha-D-glucosamine + holo-[ACP] + H(+). It participates in bacterial outer membrane biogenesis; LPS lipid A biosynthesis. Functionally, catalyzes the N-acylation of UDP-3-O-acylglucosamine using 3-hydroxyacyl-ACP as the acyl donor. Is involved in the biosynthesis of lipid A, a phosphorylated glycolipid that anchors the lipopolysaccharide to the outer membrane of the cell. This is UDP-3-O-acylglucosamine N-acyltransferase from Prochlorococcus marinus subsp. pastoris (strain CCMP1986 / NIES-2087 / MED4).